The chain runs to 377 residues: Unsaturated glucuronyl hydrolase (377 aa).

Catalysis depends on Asp-88, which acts as the Nucleophile. The Proton donor role is filled by Asp-149.

Belongs to the glycosyl hydrolase 88 family. In terms of assembly, monomer.

Its subcellular location is the cytoplasm. The catalysed reaction is beta-D-Delta(4)-GlcA-(1-&gt;4)-beta-D-Glc-(1-&gt;4)-alpha-L-Rha-(1-&gt;3)-D-Glc + H2O = beta-D-Glc-(1-&gt;4)-alpha-L-Rha-(1-&gt;3)-D-Glc + 5-dehydro-4-deoxy-D-glucuronate. With respect to regulation, partially inhibited by divalent metal ions such as calcium, copper, iron and mercury. In terms of biological role, catalyzes the hydrolysis of oligosaccharides with unsaturated glucuronyl residues at the non-reducing terminal, to a sugar or an amino sugar, and an unsaturated D-glucuronic acid (GlcA), which is nonenzymatically converted immediately to alpha-keto acid. The polypeptide is Unsaturated glucuronyl hydrolase (ugl) (Bacillus sp. (strain GL1)).